Here is a 135-residue protein sequence, read N- to C-terminus: Interleukin-4 (135 aa).

The N-terminal stretch at 1–24 (MGLTYQLIPVLVCLLVCTSHFAHG) is a signal peptide. 3 disulfides stabilise this stretch: C27-C135, C48-C85, and C70-C105. N62 carries an N-linked (GlcNAc...) asparagine glycan.

It belongs to the IL-4/IL-13 family.

The protein resides in the secreted. Its function is as follows. Participates in at least several B-cell activation processes as well as of other cell types. It is a costimulator of DNA-synthesis. It induces the expression of class II MHC molecules on resting B-cells. It enhances both secretion and cell surface expression of IgE and IgG1. It also regulates the expression of the low affinity Fc receptor for IgE (CD23) on both lymphocytes and monocytes. Positively regulates IL31RA expression in macrophages. Stimulates autophagy in dendritic cells by interfering with mTORC1 signaling and through the induction of RUFY4. The polypeptide is Interleukin-4 (IL4) (Boselaphus tragocamelus (Nilgai)).